A 429-amino-acid polypeptide reads, in one-letter code: Probable alcohol acetyltransferase orf1 (429 aa).

It belongs to the alcohol acetyltransferase FCK4 family.

It participates in secondary metabolite biosynthesis. Its function is as follows. Probable alcohol acetyltransferase; part of the gene cluster that mediates the biosynthesis of the glycolipid biosurfactant ustilagic acid (UA). UA is a secreted cellobiose glycolipid that is toxic for many microorganisms and confers biocontrol activity to U.maydis. UA consists of 15,16-dihydroxypalmitic or 2,15,16-trihydroxypalmitic acid, which is O-glycosidically linked to cellobiose at its terminal hydroxyl group. In addition, the cellobiose moiety is acetylated and acylated with a short-chain hydroxy fatty acid. UA biosynthesis starts with omega-hydroxylation of palmitic acid catalyzed by the cytochrome P450 monooxygenase cyp1. Terminal hydroxylation of palmitic acid precedes subterminal hydroxylation catalyzed by the cytochrome P450 monooxygenase cyp2. Sequential glucosylation of the hydroxy fatty acid is probably catalyzed by the glycosyltransferase ugt1. The cellobiose lipid is further decorated by acetylation of the proximal glucose residue and by acylation with a short-chain beta-hydroxy fatty acid at the distal glucose residue. The acyltransferase uat1 may be a good candidate for catalyzing either acetylation or acylation of the cellobiose lipid. The fatty acid synthase fas2 may be involved in synthesis of the carbon backbone of the short-chain beta-hydroxy fatty acid esterified to the cellobiose disaccharide. The secreted UA consists of a mixture of both alpha-hydroxylated and non-hydroxylated glycolipids; therefore, alpha-hydroxylation of the long-chain fatty, catalyzed by the fatty acid hydroxylase ahd1, occurs late in UA biosynthesis and may be the last step before secretion. This Mycosarcoma maydis (Corn smut fungus) protein is Probable alcohol acetyltransferase orf1.